A 501-amino-acid polypeptide reads, in one-letter code: L-arabinose isomerase (501 aa).

Residues Glu306, Glu333, His350, and His449 each contribute to the Mn(2+) site.

It belongs to the arabinose isomerase family. It depends on Mn(2+) as a cofactor.

The enzyme catalyses beta-L-arabinopyranose = L-ribulose. The protein operates within carbohydrate degradation; L-arabinose degradation via L-ribulose; D-xylulose 5-phosphate from L-arabinose (bacterial route): step 1/3. Functionally, catalyzes the conversion of L-arabinose to L-ribulose. The sequence is that of L-arabinose isomerase from Herpetosiphon aurantiacus (strain ATCC 23779 / DSM 785 / 114-95).